The primary structure comprises 100 residues: Co-chaperonin GroES (100 aa).

It belongs to the GroES chaperonin family. In terms of assembly, heptamer of 7 subunits arranged in a ring. Interacts with the chaperonin GroEL.

The protein resides in the cytoplasm. Together with the chaperonin GroEL, plays an essential role in assisting protein folding. The GroEL-GroES system forms a nano-cage that allows encapsulation of the non-native substrate proteins and provides a physical environment optimized to promote and accelerate protein folding. GroES binds to the apical surface of the GroEL ring, thereby capping the opening of the GroEL channel. This is Co-chaperonin GroES from Mycolicibacterium paratuberculosis (strain ATCC BAA-968 / K-10) (Mycobacterium paratuberculosis).